An 83-amino-acid polypeptide reads, in one-letter code: Defensin-1 (83 aa).

Residues 1-33 (MAGKGVGSRLSTLFLLVLLVITIGMMQVQVAEG) form the signal peptide. 4 cysteine pairs are disulfide-bonded: cysteine 36–cysteine 82, cysteine 47–cysteine 67, cysteine 53–cysteine 76, and cysteine 57–cysteine 78.

Belongs to the DEFL family.

The protein localises to the secreted. Functionally, plant defense peptide. Has antifungal activity against B.cinera, F.oxysporum, F.solani and H.annosum with IC(50) values of 0.4 ug/ml, 2.9 ug/ml, 0.9 ug/ml and 1.4 ug/ml, respectively. Has modest antifungal activity against C.albicans and T.reesei. Causes thickening of F.oxysporum hyphae and an increase in their branching. Lacks antibacterial activity against the Gram-negative bacteria E.coli and E.carotovora. This Pinus sylvestris (Scotch pine) protein is Defensin-1.